Consider the following 383-residue polypeptide: Protein pelota homolog (383 aa).

The protein belongs to the eukaryotic release factor 1 family. Pelota subfamily. Component of the Pelota-HBS1L complex, also named Dom34-Hbs1 complex, composed of PELO and HBS1L. The cofactor is a divalent metal cation.

It is found in the cytoplasm. Component of the Pelota-HBS1L complex, a complex that recognizes stalled ribosomes and triggers the No-Go Decay (NGD) pathway. In the Pelota-HBS1L complex, PELO recognizes ribosomes stalled at the 3' end of an mRNA and engages stalled ribosomes by destabilizing mRNA in the mRNA channel. Following mRNA extraction from stalled ribosomes by the SKI complex, the Pelota-HBS1L complex promotes recruitment of ABCE1, which drives the disassembly of stalled ribosomes, followed by degradation of damaged mRNAs as part of the NGD pathway. This is Protein pelota homolog (pelo) from Xenopus laevis (African clawed frog).